The chain runs to 359 residues: Peptide chain release factor 1 (359 aa).

Gln-235 carries the N5-methylglutamine modification.

This sequence belongs to the prokaryotic/mitochondrial release factor family. Methylated by PrmC. Methylation increases the termination efficiency of RF1.

The protein localises to the cytoplasm. Peptide chain release factor 1 directs the termination of translation in response to the peptide chain termination codons UAG and UAA. The protein is Peptide chain release factor 1 of Anaplasma phagocytophilum (strain HZ).